We begin with the raw amino-acid sequence, 445 residues long: MSNRKYFGTDGIRGRVGDAPITPDFVLKLGWAAGKVLARHGSRKIIIGKDTRISGYMLESALEAGLAAAGLSALFTGPMPTPAVAYLTRTFRAEAGIVISASHNPFYDNGIKFFSIDGTKLPDAVEEAIEAEMEKEISCVDSAELGKASRIVDAAGRYIEFCKATFPNELSLSELKIVVDCANGATYHIAPNVLRELGANVIAIGCEPNGVNINAEVGATDVRALQARVLAEKADLGIAFDGDGDRVIMVDHEGNKVDGDQSMYIIAREGLRQGQLRGGAVGTLMSNMGLELALKQLGIPFARAKVGDRYVLEKMQEKGWRIGAENSGHVILLDKTTTGDGIVAGLQVLAAMARNHMSLHDLCSGMKMFPQILVNVRYTAGSGDPLEHESVKAVTAEVEAALGNRGRVLLRKSGTEPLIRVMVEGEDEAQVTEFAHRIADAVKAV.

The Phosphoserine intermediate role is filled by S102. Mg(2+)-binding residues include S102, D241, D243, and D245. S102 carries the post-translational modification Phosphoserine.

Belongs to the phosphohexose mutase family. Requires Mg(2+) as cofactor. Post-translationally, activated by phosphorylation.

The enzyme catalyses alpha-D-glucosamine 1-phosphate = D-glucosamine 6-phosphate. Its function is as follows. Catalyzes the conversion of glucosamine-6-phosphate to glucosamine-1-phosphate. The polypeptide is Phosphoglucosamine mutase (Shigella flexneri serotype 5b (strain 8401)).